Reading from the N-terminus, the 347-residue chain is NADH-quinone oxidoreductase subunit H (347 aa).

Helical transmembrane passes span 22–42, 59–79, 93–113, 124–144, 171–191, 198–218, 240–260, 285–305, and 321–341; these read GVVS…TAYL, PSLA…KLVF, FIIA…VIPI, IGGI…IIIA, MALS…IQIV, PIWL…SILA, VEYS…NMIL, IPGY…FLWI, and GLKV…AILV.

Belongs to the complex I subunit 1 family. As to quaternary structure, NDH-1 is composed of 14 different subunits. Subunits NuoA, H, J, K, L, M, N constitute the membrane sector of the complex.

The protein localises to the cell inner membrane. The enzyme catalyses a quinone + NADH + 5 H(+)(in) = a quinol + NAD(+) + 4 H(+)(out). Functionally, NDH-1 shuttles electrons from NADH, via FMN and iron-sulfur (Fe-S) centers, to quinones in the respiratory chain. The immediate electron acceptor for the enzyme in this species is believed to be ubiquinone. Couples the redox reaction to proton translocation (for every two electrons transferred, four hydrogen ions are translocated across the cytoplasmic membrane), and thus conserves the redox energy in a proton gradient. This subunit may bind ubiquinone. In Orientia tsutsugamushi (strain Ikeda) (Rickettsia tsutsugamushi), this protein is NADH-quinone oxidoreductase subunit H.